A 180-amino-acid polypeptide reads, in one-letter code: Probable nicotinate-nucleotide adenylyltransferase (180 aa).

The protein belongs to the NadD family.

It carries out the reaction nicotinate beta-D-ribonucleotide + ATP + H(+) = deamido-NAD(+) + diphosphate. It functions in the pathway cofactor biosynthesis; NAD(+) biosynthesis; deamido-NAD(+) from nicotinate D-ribonucleotide: step 1/1. In terms of biological role, catalyzes the reversible adenylation of nicotinate mononucleotide (NaMN) to nicotinic acid adenine dinucleotide (NaAD). The protein is Probable nicotinate-nucleotide adenylyltransferase of Pelagibacter ubique (strain HTCC1062).